The following is a 680-amino-acid chain: MSQENHVDVPRKRIRIDQSESSRNLERNGLEDEANAPSDLSGQKFYMTESDVGIDAFLNPNLPSIDGIIKARFTDFAVFEVDTDGNIVHLTDMEAHDPILSKATGDKETEDAKDSSNQDISNDQKAPSFKEQEPATLPILPNDLQSIIPKGIGNEFIQSLHKLSVGEITDPISLILPENTPPMDKGQRTILHQFIRNNFSGLESSTKGNGTFTVSKTTRKNQPRSRRDPRLSWKALGGEYCHFHLYKENRDSMDCLGKIARLLKVPTRTLSIAGTKDRRGVTCQRVAIHHVRASRLAQLNSGSLKNSTYGFLLGNYSYKNSNLRLGDLKGNEFHIVVRNVITPKEKVVEALNSLKEHGFINYFGLQRFGTSSVGTHTIGVRLLQSDWKGAVDLILSPRPEHTGSVKEAIDLWHSTHDAEASLRILPRRMIAESSILETWSRSGNQTDYLGAFQRIPRHLRSIYPHAYQSYVWNRVASWRIKNLGDRPVVGDLVYSTESNGLSQKSPIVDPEAPDLLEDLPVSSKLSARPIEEDEVNNFSIYDIVLPLPGRNVIYPKNETFDIYKSVMNEASLDPLNMSRKDRELSLPGDYRKLLVRPENMEFNFIKYDNMEQQLILTDKDRLENRSISVSSEVGKHTAVTLKFVLPSSAYATMALREALRTATASGDQRMLMPAVLKDSI.

2 stretches are compositionally biased toward basic and acidic residues: residues methionine 1 to leucine 30 and isoleucine 99 to serine 116. 3 disordered regions span residues methionine 1–glycine 42, isoleucine 99–threonine 136, and threonine 206–proline 229. Positions threonine 206–lysine 216 are enriched in polar residues. Aspartate 277 (nucleophile) is an active-site residue. Residues glycine 358 to arginine 596 enclose the TRUD domain.

This sequence belongs to the pseudouridine synthase TruD family.

The protein resides in the nucleus. Its subcellular location is the cytoplasm. The enzyme catalyses uridine in 5S rRNA = pseudouridine in 5S rRNA. It catalyses the reaction uridine in snRNA = pseudouridine in snRNA. It carries out the reaction uridine(13) in tRNA = pseudouridine(13) in tRNA. The catalysed reaction is a uridine in mRNA = a pseudouridine in mRNA. Functionally, catalyzes pseudouridylation at position 35 in U2 snRNA stem-loop II region which induces particular conformation of the mRNA-U2 snRNA duplex and places the nucleophile in an accessible position for the first step of splicing. Also catalyzes pseudouridylation at position 56 in U2 snRNA. Also catalyzes pseudouridylation at position 50 in 5S rRNA, position 13 in cytoplasmic tRNAs, and position 35 in pre-tRNA(Tyr). Pseudouridine residues in tRNAs may stabilize the local RNA conformation, favor interactions with protein partners and play an important role in the stabilization of the codon-anticodon interaction with mRNA. Also catalyzes pseudouridylation of mRNAs in response to heat shock: mediates pseudouridylation of mRNAs with the consensus sequence 5'-UGUAR-3'. The sequence is that of Multisubstrate pseudouridine synthase 7 (pus7) from Schizosaccharomyces pombe (strain 972 / ATCC 24843) (Fission yeast).